Consider the following 241-residue polypeptide: Ribulose-phosphate 3-epimerase 1 (241 aa).

Residue Ser21 coordinates substrate. Residues His46, Asp48, and His79 each coordinate a divalent metal cation. The Proton acceptor role is filled by Asp48. Substrate-binding positions include His79, 155-158, 192-194, and 214-215; these read GFGG, DGG, and GS. An a divalent metal cation-binding site is contributed by Asp192. The Proton donor role is filled by Asp192.

It belongs to the ribulose-phosphate 3-epimerase family. A divalent metal cation serves as cofactor.

The enzyme catalyses D-ribulose 5-phosphate = D-xylulose 5-phosphate. It functions in the pathway carbohydrate degradation. Functionally, catalyzes the reversible epimerization of D-ribulose 5-phosphate to D-xylulose 5-phosphate. This chain is Ribulose-phosphate 3-epimerase 1, found in Cupriavidus necator (strain ATCC 17699 / DSM 428 / KCTC 22496 / NCIMB 10442 / H16 / Stanier 337) (Ralstonia eutropha).